The sequence spans 113 residues: Cysteine proteinase inhibitor 6 (113 aa).

An N-terminal signal peptide occupies residues 1-18; the sequence is MAMTTRTLLLAAVCAAAA. Residues 65-69 carry the Secondary area of contact motif; that stretch reads QVVSG.

Belongs to the cystatin family. Phytocystatin subfamily.

The protein localises to the secreted. Its function is as follows. Specific inhibitor of cysteine proteinases. Probably involved in the regulation of endogenous processes and in defense against pests and pathogens. The chain is Cysteine proteinase inhibitor 6 from Oryza sativa subsp. japonica (Rice).